A 476-amino-acid polypeptide reads, in one-letter code: 3-isopropylmalate dehydratase large subunit (476 aa).

Residues cysteine 353, cysteine 413, and cysteine 416 each contribute to the [4Fe-4S] cluster site.

This sequence belongs to the aconitase/IPM isomerase family. LeuC type 1 subfamily. As to quaternary structure, heterodimer of LeuC and LeuD. [4Fe-4S] cluster serves as cofactor.

The catalysed reaction is (2R,3S)-3-isopropylmalate = (2S)-2-isopropylmalate. It participates in amino-acid biosynthesis; L-leucine biosynthesis; L-leucine from 3-methyl-2-oxobutanoate: step 2/4. In terms of biological role, catalyzes the isomerization between 2-isopropylmalate and 3-isopropylmalate, via the formation of 2-isopropylmaleate. The sequence is that of 3-isopropylmalate dehydratase large subunit from Yersinia pseudotuberculosis serotype O:1b (strain IP 31758).